A 72-amino-acid polypeptide reads, in one-letter code: Translation initiation factor IF-1 (72 aa).

An S1-like domain is found at M1–K72.

It belongs to the IF-1 family. Component of the 30S ribosomal translation pre-initiation complex which assembles on the 30S ribosome in the order IF-2 and IF-3, IF-1 and N-formylmethionyl-tRNA(fMet); mRNA recruitment can occur at any time during PIC assembly.

Its subcellular location is the cytoplasm. Its function is as follows. One of the essential components for the initiation of protein synthesis. Stabilizes the binding of IF-2 and IF-3 on the 30S subunit to which N-formylmethionyl-tRNA(fMet) subsequently binds. Helps modulate mRNA selection, yielding the 30S pre-initiation complex (PIC). Upon addition of the 50S ribosomal subunit IF-1, IF-2 and IF-3 are released leaving the mature 70S translation initiation complex. This chain is Translation initiation factor IF-1, found in Granulibacter bethesdensis (strain ATCC BAA-1260 / CGDNIH1).